A 262-amino-acid chain; its full sequence is MSERESWHKEIDLFLVAMGYFTRIPMPKWVEVDSDKLNKASRYFGLVGLLIGLLSAIVFWLTQNWLPAGVSVLLAMLVGVLLTGGFHEDGLADTFDGFGGGWTAEDKLRIMKDSRLGSYGAIALILALLLKWQLLVELALYDPVVAGSALIVAHTVSRVVAASIIFTEKYVRDDETSKSKPLSQHQGINELFILVASGVLVLLFLKGLAALSLLLVMIGLRRLIVVIFRRQIGGYTGDTLGAAQQICEIVCYLVLLIVGSIL.

6 helical membrane passes run 43 to 63 (YFGL…WLTQ), 66 to 86 (LPAG…TGGF), 120 to 140 (GAIA…ELAL), 146 to 166 (AGSA…SIIF), 191 to 211 (LFIL…LAAL), and 242 to 262 (AAQQ…GSIL).

It belongs to the CobS family. Requires Mg(2+) as cofactor.

The protein resides in the cell inner membrane. The enzyme catalyses alpha-ribazole + adenosylcob(III)inamide-GDP = adenosylcob(III)alamin + GMP + H(+). It catalyses the reaction alpha-ribazole 5'-phosphate + adenosylcob(III)inamide-GDP = adenosylcob(III)alamin 5'-phosphate + GMP + H(+). Its pathway is cofactor biosynthesis; adenosylcobalamin biosynthesis; adenosylcobalamin from cob(II)yrinate a,c-diamide: step 7/7. Joins adenosylcobinamide-GDP and alpha-ribazole to generate adenosylcobalamin (Ado-cobalamin). Also synthesizes adenosylcobalamin 5'-phosphate from adenosylcobinamide-GDP and alpha-ribazole 5'-phosphate. The protein is Adenosylcobinamide-GDP ribazoletransferase of Shewanella putrefaciens (strain CN-32 / ATCC BAA-453).